A 116-amino-acid polypeptide reads, in one-letter code: Ribosome-binding factor A (116 aa).

This sequence belongs to the RbfA family. In terms of assembly, monomer. Binds 30S ribosomal subunits, but not 50S ribosomal subunits or 70S ribosomes.

The protein localises to the cytoplasm. In terms of biological role, one of several proteins that assist in the late maturation steps of the functional core of the 30S ribosomal subunit. Associates with free 30S ribosomal subunits (but not with 30S subunits that are part of 70S ribosomes or polysomes). Required for efficient processing of 16S rRNA. May interact with the 5'-terminal helix region of 16S rRNA. The polypeptide is Ribosome-binding factor A (Mycoplasma pneumoniae (strain ATCC 29342 / M129 / Subtype 1) (Mycoplasmoides pneumoniae)).